The chain runs to 340 residues: UPF0324 membrane protein OB3406 (340 aa).

The next 9 helical transmembrane spans lie at 12 to 31 (SFYT…GVLC), 36 to 58 (LDIM…TIGL), 94 to 116 (GLHA…YSLA), 126 to 148 (SILT…APLV), 155 to 177 (TAVS…TMMY), 215 to 237 (IAIV…IGIY), 257 to 276 (IPWF…IGFL), 281 to 303 (VNLL…GLNV), and 315 to 337 (VFFA…IYVM).

This sequence belongs to the UPF0324 family.

It localises to the cell membrane. This is UPF0324 membrane protein OB3406 from Oceanobacillus iheyensis (strain DSM 14371 / CIP 107618 / JCM 11309 / KCTC 3954 / HTE831).